The primary structure comprises 287 residues: Glycine--tRNA ligase alpha subunit (287 aa).

This sequence belongs to the class-II aminoacyl-tRNA synthetase family. As to quaternary structure, tetramer of two alpha and two beta subunits.

The protein resides in the cytoplasm. The enzyme catalyses tRNA(Gly) + glycine + ATP = glycyl-tRNA(Gly) + AMP + diphosphate. In Campylobacter curvus (strain 525.92), this protein is Glycine--tRNA ligase alpha subunit.